Reading from the N-terminus, the 607-residue chain is Elongation factor 4 (607 aa).

A tr-type G domain is found at 11 to 193 (EKIRNFSIIA…QIVEKVPAPQ (183 aa)). GTP-binding positions include 23–28 (DHGKST) and 140–143 (NKID).

Belongs to the TRAFAC class translation factor GTPase superfamily. Classic translation factor GTPase family. LepA subfamily.

The protein resides in the cell membrane. The catalysed reaction is GTP + H2O = GDP + phosphate + H(+). In terms of biological role, required for accurate and efficient protein synthesis under certain stress conditions. May act as a fidelity factor of the translation reaction, by catalyzing a one-codon backward translocation of tRNAs on improperly translocated ribosomes. Back-translocation proceeds from a post-translocation (POST) complex to a pre-translocation (PRE) complex, thus giving elongation factor G a second chance to translocate the tRNAs correctly. Binds to ribosomes in a GTP-dependent manner. The chain is Elongation factor 4 from Lactococcus lactis subsp. lactis (strain IL1403) (Streptococcus lactis).